A 732-amino-acid chain; its full sequence is Kell blood group glycoprotein (732 aa).

The segment at 1 to 37 is disordered; that stretch reads MEGGDQSEEEPRERSQAGGMGTLWSQESTPEERLPVE. At 1 to 47 the chain is on the cytoplasmic side; that stretch reads MEGGDQSEEEPRERSQAGGMGTLWSQESTPEERLPVEGSRPWAVARR. Ser-7 is modified (phosphoserine). A helical; Signal-anchor for type II membrane protein transmembrane segment spans residues 48–67; that stretch reads VLTAILILGLLLCFSVLLFY. At 68 to 732 the chain is on the extracellular side; sequence NFQNCGPRPC…LNPSSRCQLW (665 aa). Residues 76-732 form the Peptidase M13 domain; sequence PCETSVCLDL…LNPSSRCQLW (657 aa). Cys-77 and Cys-82 are disulfide-bonded. N-linked (GlcNAc...) asparagine glycosylation is found at Asn-94 and Asn-115. 4 cysteine pairs are disulfide-bonded: Cys-100/Cys-717, Cys-108/Cys-682, Cys-155/Cys-410, and Cys-610/Cys-729. N-linked (GlcNAc...) asparagine; in KEL2 antigen glycosylation is present at Asn-191. An N-linked (GlcNAc...) asparagine glycan is attached at Asn-345. His-581 is a binding site for Zn(2+). Glu-582 is a catalytic residue. Residue His-585 coordinates Zn(2+). A glycan (N-linked (GlcNAc...) asparagine) is linked at Asn-627. Glu-634 is a binding site for Zn(2+). Residue Asp-638 is the Proton donor of the active site. Positions 684 to 703 are disordered; it reads KPSPQDSHDTHSPPHLRVHG.

The protein belongs to the peptidase M13 family. Heterodimer with XK; disulfide-linked. The cofactor is Zn(2+). Post-translationally, N-glycosylated. In terms of tissue distribution, expressed at high levels in erythrocytes and testis (in Sertoli cells), and, at lower levels, in skeletal muscle, tonsils (in follicular dendritic cells), lymph node, spleen and appendix (at protein level). Also expressed in many adult and fetal nonerythroid tissues, including brain, spleen, lymph nodes and bone marrow.

It is found in the cell membrane. In terms of biological role, zinc endopeptidase with endothelin-3-converting enzyme activity. Cleaves EDN1, EDN2 and EDN3, with a marked preference for EDN3. In Homo sapiens (Human), this protein is Kell blood group glycoprotein (KEL).